The following is a 134-amino-acid chain: UPF0412 protein YaaI (134 aa).

The signal sequence occupies residues 1–23; it reads MKSVFTLSASLAISLLLCCTAQA.

The protein belongs to the UPF0412 family.

The protein is UPF0412 protein YaaI of Escherichia coli (strain SMS-3-5 / SECEC).